Here is a 107-residue protein sequence, read N- to C-terminus: Large ribosomal subunit protein uL24 (107 aa).

It belongs to the universal ribosomal protein uL24 family. As to quaternary structure, part of the 50S ribosomal subunit.

In terms of biological role, one of two assembly initiator proteins, it binds directly to the 5'-end of the 23S rRNA, where it nucleates assembly of the 50S subunit. One of the proteins that surrounds the polypeptide exit tunnel on the outside of the subunit. This Nitrosomonas eutropha (strain DSM 101675 / C91 / Nm57) protein is Large ribosomal subunit protein uL24.